A 363-amino-acid chain; its full sequence is Teichoic acids export ATP-binding protein TagH (363 aa).

The ABC transporter domain maps to 27-246 (KHFFNIGNVD…YRKFSKDFKA (220 aa)). 60–67 (GINGSGKS) contacts ATP. A unknown region spans residues 247 to 363 (QTAAYRKKYQ…KSQSVLFNSK (117 aa)).

This sequence belongs to the ABC transporter superfamily. Teichoic acids exporter (TC 3.A.1.104.1) family. The complex is composed of two ATP-binding proteins (TagH) and two transmembrane proteins (TagG).

The protein localises to the cell membrane. The enzyme catalyses ATP + H2O + teichoic acidSide 1 = ADP + phosphate + teichoic acidSide 2.. In terms of biological role, part of the ABC transporter complex TagGH involved in teichoic acids export. Responsible for energy coupling to the transport system. The protein is Teichoic acids export ATP-binding protein TagH of Lactiplantibacillus plantarum (strain ATCC BAA-793 / NCIMB 8826 / WCFS1) (Lactobacillus plantarum).